A 353-amino-acid polypeptide reads, in one-letter code: Photosystem II D2 protein (353 aa).

The residue at position 2 (T2) is an N-acetylthreonine. T2 bears the Phosphothreonine mark. The helical transmembrane segment at 41–61 (CAYFALGGWFTGTTFVTSWYT) threads the bilayer. H118 serves as a coordination point for chlorophyll a. Residues 125–141 (GFMLRQFELARSVQLRP) traverse the membrane as a helical segment. Pheophytin a is bound by residues Q130 and N143. A helical transmembrane segment spans residues 153-166 (VFVSVFLIYPLGQS). Residue H198 coordinates chlorophyll a. Residues 208–228 (AALLCAIHGATVENTLFEDGD) form a helical membrane-spanning segment. 2 residues coordinate a plastoquinone: H215 and F262. H215 is a Fe cation binding site. H269 provides a ligand contact to Fe cation. The chain crosses the membrane as a helical span at residues 279–295 (GLWMSALGVVGLALNLR).

This sequence belongs to the reaction center PufL/M/PsbA/D family. In terms of assembly, PSII is composed of 1 copy each of membrane proteins PsbA, PsbB, PsbC, PsbD, PsbE, PsbF, PsbH, PsbI, PsbJ, PsbK, PsbL, PsbM, PsbT, PsbX, PsbY, PsbZ, Psb30/Ycf12, at least 3 peripheral proteins of the oxygen-evolving complex and a large number of cofactors. It forms dimeric complexes. Requires The D1/D2 heterodimer binds P680, chlorophylls that are the primary electron donor of PSII, and subsequent electron acceptors. It shares a non-heme iron and each subunit binds pheophytin, quinone, additional chlorophylls, carotenoids and lipids. There is also a Cl(-1) ion associated with D1 and D2, which is required for oxygen evolution. The PSII complex binds additional chlorophylls, carotenoids and specific lipids. as cofactor.

The protein resides in the plastid. The protein localises to the chloroplast thylakoid membrane. The catalysed reaction is 2 a plastoquinone + 4 hnu + 2 H2O = 2 a plastoquinol + O2. Functionally, photosystem II (PSII) is a light-driven water:plastoquinone oxidoreductase that uses light energy to abstract electrons from H(2)O, generating O(2) and a proton gradient subsequently used for ATP formation. It consists of a core antenna complex that captures photons, and an electron transfer chain that converts photonic excitation into a charge separation. The D1/D2 (PsbA/PsbD) reaction center heterodimer binds P680, the primary electron donor of PSII as well as several subsequent electron acceptors. D2 is needed for assembly of a stable PSII complex. This is Photosystem II D2 protein from Lemna minor (Common duckweed).